The primary structure comprises 147 residues: Nucleoside diphosphate kinase (147 aa).

Positions 9, 57, 85, 91, 102, and 112 each coordinate ATP. The Pros-phosphohistidine intermediate role is filled by histidine 115.

This sequence belongs to the NDK family. Homotetramer. Mg(2+) serves as cofactor.

The protein localises to the cytoplasm. It carries out the reaction a 2'-deoxyribonucleoside 5'-diphosphate + ATP = a 2'-deoxyribonucleoside 5'-triphosphate + ADP. The enzyme catalyses a ribonucleoside 5'-diphosphate + ATP = a ribonucleoside 5'-triphosphate + ADP. Its function is as follows. Major role in the synthesis of nucleoside triphosphates other than ATP. The ATP gamma phosphate is transferred to the NDP beta phosphate via a ping-pong mechanism, using a phosphorylated active-site intermediate. This is Nucleoside diphosphate kinase from Listeria monocytogenes serotype 4a (strain HCC23).